The following is a 473-amino-acid chain: Probable serine/threonine-protein kinase glkA (473 aa).

The disordered stretch occupies residues Met-1–Ser-84. The span at Asn-7 to Ser-84 shows a compositional bias: low complexity. A Protein kinase domain is found at Tyr-91 to Leu-366. Residues Val-97 to Val-105 and Lys-119 contribute to the ATP site. Asp-208 acts as the Proton acceptor in catalysis. Disordered stretches follow at residues Gly-389–Lys-418 and Ser-437–Ile-473. The span at Ser-442–Asn-466 shows a compositional bias: low complexity.

The protein belongs to the protein kinase superfamily. CMGC Ser/Thr protein kinase family. GSK-3 subfamily.

It catalyses the reaction L-seryl-[tau protein] + ATP = O-phospho-L-seryl-[tau protein] + ADP + H(+). It carries out the reaction L-threonyl-[tau protein] + ATP = O-phospho-L-threonyl-[tau protein] + ADP + H(+). The chain is Probable serine/threonine-protein kinase glkA (glkA) from Dictyostelium discoideum (Social amoeba).